A 142-amino-acid polypeptide reads, in one-letter code: Transcription antitermination protein NusB (142 aa).

It belongs to the NusB family.

Functionally, involved in transcription antitermination. Required for transcription of ribosomal RNA (rRNA) genes. Binds specifically to the boxA antiterminator sequence of the ribosomal RNA (rrn) operons. This chain is Transcription antitermination protein NusB, found in Thermotoga petrophila (strain ATCC BAA-488 / DSM 13995 / JCM 10881 / RKU-1).